An 890-amino-acid polypeptide reads, in one-letter code: MNQEEAIFRSADMTYVQLYIPLEVIREVTFLLGKMSVFMVMDLNKDLTAFQRGYVNQLRRFDEVERMVGFLNEVVEKHAAETWKYILHIDDEGNDIAQPDMADLINTMEPLSLENVNDMVKEITDCESRARQLDESLDSLRSKLNDLLEQRQVIFECSKFIEVNPGIAGRATNPEIEQEERDVDEFRMTPDDISETLSDAFSFDDETPQDRGALGNDLTRNQSVEDLSFLEQGYQHRYMITGSIRRTKVDILNRILWRLLRGNLIFQNFPIEEPLLEGKEKVEKDCFIIFTHGETLLKKVKRVIDSLNGKIVSLNTRSSELVDTLNRQIDDLQRILDTTEQTLHTELLVIHDQLPVWSAMTKREKYVYTTLNKFQQESQGLIAEGWVPSTELIHLQDSLKDYIETLGSEYSTVFNVILTNKLPPTYHRTNKFTQAFQSIVDAYGIATYKEINAGLATVVTFPFMFAIMFGDMGHGFILFLMALFLVLNERKFGAMHRDEIFDMAFTGRYVLLLMGAFSVYTGLLYNDIFSKSMTIFKSGWQWPSTFRKGESIEAKKTGVYPFGLDFAWHGTDNGLLFSNSYKMKLSILMGYAHMTYSFMFSYINYRAKNSKVDIIGNFIPGLVFMQSIFGYLSWAIVYKWSKDWIKDDKPAPGLLNMLINMFLAPGTIDDQLYSGQAKLQVVLLLAALVCVPWLLLYKPLTLRRLNKNGGGGRPHGYQSVGNIEHEEQIAQQRHSAEGFQGMIISDVASVADSINESVGGGEQGPFNFGDVMIHQVIHTIEFCLNCISHTASYLRLWALSLAHAQLSSVLWDMTISNAFSSKNSGSPLAVMKVVFLFAMWFVLTVCILVFMEGTSAMLHALRLHWVEAMSKFFEGEGYAYEPFSFRAIIE.

An N-acetylmethionine modification is found at M1. Residues 1–450 (MNQEEAIFRS…DAYGIATYKE (450 aa)) lie on the Cytoplasmic side of the membrane. A coiled-coil region spans residues 113–154 (LENVNDMVKEITDCESRARQLDESLDSLRSKLNDLLEQRQVI). Phosphoserine occurs at positions 223 and 228. A coiled-coil region spans residues 297–347 (LKKVKRVIDSLNGKIVSLNTRSSELVDTLNRQIDDLQRILDTTEQTLHTEL). The helical transmembrane segment at 451–469 (INAGLATVVTFPFMFAIMF) threads the bilayer. The Vacuolar portion of the chain corresponds to 470 to 471 (GD). The chain crosses the membrane as a helical span at residues 472-488 (MGHGFILFLMALFLVLN). At 489-502 (ERKFGAMHRDEIFD) the chain is on the cytoplasmic side. Residues 503 to 532 (MAFTGRYVLLLMGAFSVYTGLLYNDIFSKS) form a helical membrane-spanning segment. The Vacuolar segment spans residues 533-580 (MTIFKSGWQWPSTFRKGESIEAKKTGVYPFGLDFAWHGTDNGLLFSNS). Residues 581–600 (YKMKLSILMGYAHMTYSFMF) traverse the membrane as a helical segment. Over 601–618 (SYINYRAKNSKVDIIGNF) the chain is Cytoplasmic. A helical transmembrane segment spans residues 619 to 639 (IPGLVFMQSIFGYLSWAIVYK). Topologically, residues 640–682 (WSKDWIKDDKPAPGLLNMLINMFLAPGTIDDQLYSGQAKLQVV) are vacuolar. The chain crosses the membrane as a helical span at residues 683-702 (LLLAALVCVPWLLLYKPLTL). The Cytoplasmic segment spans residues 703 to 779 (RRLNKNGGGG…DVMIHQVIHT (77 aa)). Residues 780–804 (IEFCLNCISHTASYLRLWALSLAHA) form a helical membrane-spanning segment. Over 805–828 (QLSSVLWDMTISNAFSSKNSGSPL) the chain is Vacuolar. Residues 829–867 (AVMKVVFLFAMWFVLTVCILVFMEGTSAMLHALRLHWVE) form a helical membrane-spanning segment. Over 868–890 (AMSKFFEGEGYAYEPFSFRAIIE) the chain is Cytoplasmic.

It belongs to the V-ATPase 116 kDa subunit family. In terms of assembly, V-ATPase is a heteromultimeric enzyme composed of a peripheral catalytic V1 complex (components A to H) attached to an integral membrane V0 proton pore complex (components: a, c, c', c'', d, e, f and VOA1). In terms of processing, glycosylated.

The protein resides in the endosome membrane. It is found in the golgi apparatus membrane. Subunit of the V0 complex of vacuolar(H+)-ATPase (V-ATPase), a multisubunit enzyme composed of a peripheral complex (V1) that hydrolyzes ATP and a membrane integral complex (V0) that translocates protons. V-ATPase is responsible for acidifying and maintaining the pH of intracellular compartments. Is present only in Golgi- and endosome-residing V-ATPase complexes; enzymes containing this subunit have a 4-fold lower ratio of proton transport to ATP hydrolysis than complexes containing the vacuolar isoform and do not dissociate V1 and V0 in response to glucose depletion. In Saccharomyces cerevisiae (strain ATCC 204508 / S288c) (Baker's yeast), this protein is V-type proton ATPase subunit a, Golgi isoform (STV1).